We begin with the raw amino-acid sequence, 744 residues long: Phosphoribosylformylglycinamidine synthase subunit PurL (744 aa).

H45 is an active-site residue. The ATP site is built by Y48 and K87. A Mg(2+)-binding site is contributed by E89. Residues 90–93 (SHNH) and R112 each bind substrate. H91 serves as the catalytic Proton acceptor. Position 113 (D113) interacts with Mg(2+). Residue Q236 coordinates substrate. D264 contributes to the Mg(2+) binding site. 308-310 (ESQ) is a substrate binding site. 2 residues coordinate ATP: N492 and G529. N530 contacts Mg(2+). A substrate-binding site is contributed by S532.

It belongs to the FGAMS family. In terms of assembly, monomer. Part of the FGAM synthase complex composed of 1 PurL, 1 PurQ and 2 PurS subunits.

The protein resides in the cytoplasm. It catalyses the reaction N(2)-formyl-N(1)-(5-phospho-beta-D-ribosyl)glycinamide + L-glutamine + ATP + H2O = 2-formamido-N(1)-(5-O-phospho-beta-D-ribosyl)acetamidine + L-glutamate + ADP + phosphate + H(+). Its pathway is purine metabolism; IMP biosynthesis via de novo pathway; 5-amino-1-(5-phospho-D-ribosyl)imidazole from N(2)-formyl-N(1)-(5-phospho-D-ribosyl)glycinamide: step 1/2. In terms of biological role, part of the phosphoribosylformylglycinamidine synthase complex involved in the purines biosynthetic pathway. Catalyzes the ATP-dependent conversion of formylglycinamide ribonucleotide (FGAR) and glutamine to yield formylglycinamidine ribonucleotide (FGAM) and glutamate. The FGAM synthase complex is composed of three subunits. PurQ produces an ammonia molecule by converting glutamine to glutamate. PurL transfers the ammonia molecule to FGAR to form FGAM in an ATP-dependent manner. PurS interacts with PurQ and PurL and is thought to assist in the transfer of the ammonia molecule from PurQ to PurL. The chain is Phosphoribosylformylglycinamidine synthase subunit PurL from Erythrobacter litoralis (strain HTCC2594).